A 272-amino-acid chain; its full sequence is NAD kinase (272 aa).

Aspartate 50 (proton acceptor) is an active-site residue. NAD(+) is bound by residues 50 to 51 (DG), 126 to 127 (NE), arginine 152, aspartate 154, 165 to 170 (TAYNKS), and alanine 189.

It belongs to the NAD kinase family. It depends on a divalent metal cation as a cofactor.

It is found in the cytoplasm. It carries out the reaction NAD(+) + ATP = ADP + NADP(+) + H(+). Its function is as follows. Involved in the regulation of the intracellular balance of NAD and NADP, and is a key enzyme in the biosynthesis of NADP. Catalyzes specifically the phosphorylation on 2'-hydroxyl of the adenosine moiety of NAD to yield NADP. In Streptococcus pneumoniae (strain 70585), this protein is NAD kinase.